The chain runs to 435 residues: Trigger factor (435 aa).

The 86-residue stretch at 163–248 (GDFVTFDFKG…VKEIKVKELP (86 aa)) folds into the PPIase FKBP-type domain.

Belongs to the FKBP-type PPIase family. Tig subfamily.

Its subcellular location is the cytoplasm. The enzyme catalyses [protein]-peptidylproline (omega=180) = [protein]-peptidylproline (omega=0). Involved in protein export. Acts as a chaperone by maintaining the newly synthesized protein in an open conformation. Functions as a peptidyl-prolyl cis-trans isomerase. In Geobacter sp. (strain M21), this protein is Trigger factor.